The following is a 454-amino-acid chain: 3-phosphoshikimate 1-carboxyvinyltransferase (454 aa).

3 residues coordinate 3-phosphoshikimate: lysine 39, serine 40, and arginine 44. Phosphoenolpyruvate is bound at residue lysine 39. Residues glycine 112 and arginine 140 each contribute to the phosphoenolpyruvate site. Residues serine 185, glutamine 187, aspartate 333, and lysine 360 each contribute to the 3-phosphoshikimate site. Residue glutamine 187 participates in phosphoenolpyruvate binding. Aspartate 333 acts as the Proton acceptor in catalysis. Phosphoenolpyruvate-binding residues include arginine 364 and arginine 405.

The protein belongs to the EPSP synthase family. As to quaternary structure, monomer.

The protein resides in the cytoplasm. The enzyme catalyses 3-phosphoshikimate + phosphoenolpyruvate = 5-O-(1-carboxyvinyl)-3-phosphoshikimate + phosphate. Its pathway is metabolic intermediate biosynthesis; chorismate biosynthesis; chorismate from D-erythrose 4-phosphate and phosphoenolpyruvate: step 6/7. Its function is as follows. Catalyzes the transfer of the enolpyruvyl moiety of phosphoenolpyruvate (PEP) to the 5-hydroxyl of shikimate-3-phosphate (S3P) to produce enolpyruvyl shikimate-3-phosphate and inorganic phosphate. The chain is 3-phosphoshikimate 1-carboxyvinyltransferase from Xylella fastidiosa (strain Temecula1 / ATCC 700964).